We begin with the raw amino-acid sequence, 396 residues long: Elongation factor Tu (396 aa).

One can recognise a tr-type G domain in the interval 10–206; it reads KPHVNVGTIG…ALDDYIPEPE (197 aa). The tract at residues 19–26 is G1; that stretch reads GHVDHGKT. 19 to 26 lines the GTP pocket; that stretch reads GHVDHGKT. Thr-26 contacts Mg(2+). A G2 region spans residues 60–64; the sequence is GITIA. The interval 81–84 is G3; it reads DCPG. Residues 81 to 85 and 136 to 139 each bind GTP; these read DCPGH and NKAD. The G4 stretch occupies residues 136–139; it reads NKAD. A G5 region spans residues 174 to 176; the sequence is SAL.

It belongs to the TRAFAC class translation factor GTPase superfamily. Classic translation factor GTPase family. EF-Tu/EF-1A subfamily. In terms of assembly, monomer.

The protein localises to the cytoplasm. It catalyses the reaction GTP + H2O = GDP + phosphate + H(+). Functionally, GTP hydrolase that promotes the GTP-dependent binding of aminoacyl-tRNA to the A-site of ribosomes during protein biosynthesis. The protein is Elongation factor Tu of Methylococcus capsulatus (strain ATCC 33009 / NCIMB 11132 / Bath).